Here is a 148-residue protein sequence, read N- to C-terminus: MAAPIILFSFLLFFSVSVSALNVGVQLIHPSISLTKECSRKCESEFCSVPPFLRYGKYCGLLYSGCPGERPCDGLDSCCMKHDACVQSKNNDYLSQECSQKFINCMNNFSQKKQPTFKGNKCDADEVIDVISIVMEAALIAGKVLKKP.

Residues M1 to A20 form the signal peptide. Disulfide bonds link C38/C66, C42/C72, C47/C122, C59/C79, C78/C105, and C85/C98. Ca(2+)-binding residues include Y58, G60, and Y63. The active site involves H82. D83 serves as a coordination point for Ca(2+).

This sequence belongs to the phospholipase A2 family. As to quaternary structure, interacts with MYB30. Ca(2+) is required as a cofactor. As to expression, ubiquitous but expressed at a low level.

It localises to the secreted. The protein localises to the golgi apparatus. It is found in the cytoplasmic vesicle. The protein resides in the nucleus. It catalyses the reaction a 1,2-diacyl-sn-glycero-3-phosphocholine + H2O = a 1-acyl-sn-glycero-3-phosphocholine + a fatty acid + H(+). PA2 catalyzes the calcium-dependent hydrolysis of the 2-acyl groups in 3-sn-phosphoglycerides. Releases lysophospholipids (LPLs) and free fatty acids (FFAs) from membrane phospholipids in response to hormones and other external stimuli. Modulates the trafficking of PIN proteins to the plasma membrane. Negatively regulates MYB30 transcriptional activity and hypersensitive response control. The chain is Phospholipase A2-alpha from Arabidopsis thaliana (Mouse-ear cress).